The following is a 524-amino-acid chain: MNMKKATIAATAGIAVTAFAAPTIASASTVVVEAGDTLWGIAQSKGTTVDALKKANNLTSDKIVPGQKLQVTEVASEKTEKSVSATWLNVRSGAGVDNSIVTSLKGGTKVTVEAAESNGWNKISYGEGKTGYVNGKYLGDAVTSAPVAKQEVKQETTKQTAPAAETKTEVKQSTPAPTAPKAAETKTAPVVDTNATTHTVKSGDTIWALSVKYGASVQDLMSWNNLSSSSIYVGQKIAVKQSAAKTAAPKAEVKTEAPAVEKETSTPVVKENTNTTVKKEVTTQTQTNTTKAPAQAAKPAPAPAPAPTVNTNASTYTVKSGDSLSKIANTFGTSVSKIKALNNLTSDNLQVGTVLKVKGTVPTTNTNNNSNTTAPTTNTSNNNTSSNTSTPSKNTNTNTNQGSSNSASASALIAEAQKHLGKAYSWGGNGPTTFDCSGFTSYVFAKSGISLPRTSGAQYASTSRISESQAKPGDLVFFDYGSGIAHVGIYVGNGQMINAQDNGVKYDNIHGSGWGKYLVGFGRV.

Residues 1 to 27 (MNMKKATIAATAGIAVTAFAAPTIASA) form the signal peptide. A LysM 1 domain is found at 28–71 (STVVVEAGDTLWGIAQSKGTTVDALKKANNLTSDKIVPGQKLQV). The region spanning 78–142 (KTEKSVSATW…VNGKYLGDAV (65 aa)) is the SH3b domain. The disordered stretch occupies residues 150 to 188 (QEVKQETTKQTAPAAETKTEVKQSTPAPTAPKAAETKTA). A compositionally biased stretch (low complexity) spans 174–188 (TPAPTAPKAAETKTA). The 44-residue stretch at 196–239 (TTHTVKSGDTIWALSVKYGASVQDLMSWNNLSSSSIYVGQKIAV) folds into the LysM 2 domain. Over residues 272 to 299 (NTNTTVKKEVTTQTQTNTTKAPAQAAKP) the composition is skewed to low complexity. The tract at residues 272-313 (NTNTTVKKEVTTQTQTNTTKAPAQAAKPAPAPAPAPTVNTNA) is disordered. A LysM 3 domain is found at 314–357 (STYTVKSGDSLSKIANTFGTSVSKIKALNNLTSDNLQVGTVLKV). The disordered stretch occupies residues 360–408 (TVPTTNTNNNSNTTAPTTNTSNNNTSSNTSTPSKNTNTNTNQGSSNSAS). Residues 362–408 (PTTNTNNNSNTTAPTTNTSNNNTSSNTSTPSKNTNTNTNQGSSNSAS) are compositionally biased toward low complexity. The NlpC/P60 domain occupies 406 to 524 (SASASALIAE…GKYLVGFGRV (119 aa)). Cysteine 436 serves as the catalytic Nucleophile. The active-site Proton acceptor is histidine 486. Residue asparagine 498 is part of the active site.

This sequence belongs to the peptidase C40 family.

Functionally, this major extracellular protein may be involved in the invasion of non-professional phagocytic cells by Listeria. The polypeptide is Probable endopeptidase p60 (iap) (Listeria welshimeri).